The chain runs to 145 residues: D-aminoacyl-tRNA deacylase (145 aa).

A Gly-cisPro motif, important for rejection of L-amino acids motif is present at residues 137 to 138 (GP).

It belongs to the DTD family. In terms of assembly, homodimer.

It is found in the cytoplasm. It carries out the reaction glycyl-tRNA(Ala) + H2O = tRNA(Ala) + glycine + H(+). It catalyses the reaction a D-aminoacyl-tRNA + H2O = a tRNA + a D-alpha-amino acid + H(+). Its function is as follows. An aminoacyl-tRNA editing enzyme that deacylates mischarged D-aminoacyl-tRNAs. Also deacylates mischarged glycyl-tRNA(Ala), protecting cells against glycine mischarging by AlaRS. Acts via tRNA-based rather than protein-based catalysis; rejects L-amino acids rather than detecting D-amino acids in the active site. By recycling D-aminoacyl-tRNA to D-amino acids and free tRNA molecules, this enzyme counteracts the toxicity associated with the formation of D-aminoacyl-tRNA entities in vivo and helps enforce protein L-homochirality. The polypeptide is D-aminoacyl-tRNA deacylase (Francisella tularensis subsp. holarctica (strain LVS)).